Here is a 699-residue protein sequence, read N- to C-terminus: MKRRNADCSKLRRPLKRNRITEGIYGSTFLYLKFLVVWALVLLADFVLEFRFEYLWPFWLFIRSVYDSFRYQGLAFSVFFVCVAFTSDIICLLFIPVQWLFFAASTYVWVQYVWHTERGVCLPTVSLWILFVYIEAAIRFKDLKHFHVDLCRPFAAHCIGYPVVTLGFGFKSYVSYKMRLRKQKEVQKENEFYMQLLQQALPPEQQLIQRQEREAEEAAAAAAAAASKSIHDVDSPAVAQNGSAGGKKPSSNTLPELEYREKERGKNESKKQHNHNQNHHSSTSSSILPSVDNKAQEMEYMENHVNSKRLSSSDLLGSTENLLKDEHSSSSSSSTSSNSNKNYKNASGGGGGGGSSSPRGHGTANGSVPSSSGPSSSASSSSKGDRKQKYGGGKNSASHRDPVENCIPNNQLSKPEALVRLEQDVKKLKADLQASRQTEQDLRSQLGSLGTSERSIRSELGQLRQENELLQNKLHNAVQAKQKDKQTLGQLEKRLKAEQEARAAAEKLLAEEKKRKKLEEATAARAVALAAATRGECTESLRRRISELEAECKKLTLDIKVKEDQIRELELKVQELHKYKENEKDTEVLMSALSAMQDKTQHLENSLSAETRIKLDLFSALGDAKRQLEIAQGQILQKDQEIKDLKQKIAEVMAVMPSVVYSADTGSMTPVTPHYSSKFMDTSPSGLDPNASVYQPLKK.

4 helical membrane-spanning segments follow: residues 28-48 (TFLY…DFVL), 75-95 (AFSV…LLFI), 120-140 (VCLP…AIRF), and 154-174 (FAAH…KSYV). Disordered stretches follow at residues 219-289 (AAAA…SILP), 322-411 (LLKD…PNNQ), 432-451 (LQAS…SLGT), and 679-699 (FMDT…PLKK). Asn241, Asn267, Asn345, and Asn365 each carry an N-linked (GlcNAc...) asparagine glycan. Basic and acidic residues predominate over residues 257–271 (LEYREKERGKNESKK). Positions 329-346 (SSSSSSTSSNSNKNYKNA) are enriched in low complexity. The span at 366–382 (GSVPSSSGPSSSASSSS) shows a compositional bias: low complexity. N-linked (GlcNAc...) asparagine glycosylation occurs at Asn690.

This sequence belongs to the macoilin family.

Its subcellular location is the nucleus membrane. The protein resides in the cell projection. The protein localises to the axon. It localises to the rough endoplasmic reticulum membrane. May play a role in the regulation of neuronal activity. In Danio rerio (Zebrafish), this protein is Macoilin-2.